A 196-amino-acid chain; its full sequence is Ribosomal RNA large subunit methyltransferase E (196 aa).

S-adenosyl-L-methionine contacts are provided by glycine 50, tryptophan 52, aspartate 70, aspartate 87, and aspartate 112. The active-site Proton acceptor is lysine 152.

It belongs to the class I-like SAM-binding methyltransferase superfamily. RNA methyltransferase RlmE family.

It localises to the cytoplasm. It catalyses the reaction uridine(2552) in 23S rRNA + S-adenosyl-L-methionine = 2'-O-methyluridine(2552) in 23S rRNA + S-adenosyl-L-homocysteine + H(+). In terms of biological role, specifically methylates the uridine in position 2552 of 23S rRNA at the 2'-O position of the ribose in the fully assembled 50S ribosomal subunit. In Bdellovibrio bacteriovorus (strain ATCC 15356 / DSM 50701 / NCIMB 9529 / HD100), this protein is Ribosomal RNA large subunit methyltransferase E.